The following is a 350-amino-acid chain: Twinfilin-1 (350 aa).

ADF-H domains lie at 4-139 (QTGI…KYLA) and 177-313 (GIAF…EEVH). Residues 316–350 (QHAHKQNFAKPKGPAGKRGIRRLIRGPAEAETAND) are disordered.

This sequence belongs to the actin-binding proteins ADF family. Twinfilin subfamily. In terms of assembly, interacts with G-actin; ADP-actin form.

It is found in the cytoplasm. It localises to the cytoskeleton. Its function is as follows. Actin-binding protein involved in motile and morphological processes. Inhibits actin polymerization, likely by sequestering G-actin. The protein is Twinfilin-1 (twf1) of Xenopus tropicalis (Western clawed frog).